A 416-amino-acid chain; its full sequence is Histidinol dehydrogenase (416 aa).

NAD(+) contacts are provided by Y117, Q178, and N201. Substrate is bound by residues T224, Q246, and H249. Q246 and H249 together coordinate Zn(2+). Active-site proton acceptor residues include E314 and H315. Positions 315, 348, 402, and 407 each coordinate substrate. D348 lines the Zn(2+) pocket. Residue H407 coordinates Zn(2+).

Belongs to the histidinol dehydrogenase family. The cofactor is Zn(2+).

It carries out the reaction L-histidinol + 2 NAD(+) + H2O = L-histidine + 2 NADH + 3 H(+). The protein operates within amino-acid biosynthesis; L-histidine biosynthesis; L-histidine from 5-phospho-alpha-D-ribose 1-diphosphate: step 9/9. Functionally, catalyzes the sequential NAD-dependent oxidations of L-histidinol to L-histidinaldehyde and then to L-histidine. This chain is Histidinol dehydrogenase, found in Staphylococcus aureus (strain bovine RF122 / ET3-1).